A 350-amino-acid chain; its full sequence is Leucine-rich repeat-containing protein 58 (350 aa).

10 LRR repeats span residues 14-34 (NLTH…NKRK), 35-56 (DVQQ…VASF), 58-80 (HLHL…LGLT), 81-102 (KLKT…KEMG), 105-125 (RLEV…QFLQ), 128-149 (TLKS…IENL), 151-173 (SLEF…ANLP), 174-195 (YLSY…LAQV), 197-218 (SLRS…ILSL), and 220-240 (HLHE…RDLT).

The protein is Leucine-rich repeat-containing protein 58 (lrrc58) of Xenopus laevis (African clawed frog).